A 475-amino-acid polypeptide reads, in one-letter code: MNLQENSSQQLKRTMKSRHLFMISLGGVIGTGLFLSTGYTLHQAGPGGTILAYVIGGLMMYLVMQCLGELSVAMPVTGSFQKYATTFIGPSTGFMVGIMYWINWVVTVGSEFTASGILMQRWFPDSSVWMWSAIFAALLFICNAFSVKLFAETEFWFSSVKIVTIILFIILGGAAMFGLISLNGTADAPMLSNFTDHGGLFPNGFLAVFIAMISVSFAFSGTELIGVTAGESANPQKDIPRSIRNVAWRTVIFFIGAVFILSGLISWKDAGVIESPFVAVFAEIGIPYAADIMNFVILTALLSVANSGLYASTRMMWSLANENMISSRFKKVTSKGIPLNALMISMAVSCLSLVSSIVAPGTVYVVMVAIAGFAGVVVWMSIALSQLLFRKRFLKKGGDVKDLTFRTPLYPLMPIAALLLCSASCIGLAFDPNQRIALFCGVPCIILCYLIYHFKRNVTKAKKISQEEYPADHIL.

The next 12 helical transmembrane spans lie at 20–40 (LFMI…TGYT), 44–64 (AGPG…YLVM), 87–107 (FIGP…WVVT), 127–147 (SVWM…AFSV), 162–182 (IVTI…LISL), 199–219 (GLFP…SFAF), 246–266 (VAWR…GLIS), 277–297 (FVAV…NFVI), 341–361 (ALMI…VAPG), 363–383 (VYVV…MSIA), 410–430 (YPLM…GLAF), and 434–454 (QRIA…IYHF).

This sequence belongs to the amino acid-polyamine-organocation (APC) superfamily.

It is found in the cell membrane. The polypeptide is Putative histidine permease (hutM) (Bacillus subtilis (strain 168)).